The chain runs to 299 residues: Very long chain fatty acid elongase 5 (299 aa).

Methionine 1 carries the post-translational modification N-acetylmethionine. A run of 7 helical transmembrane segments spans residues 26–46 (WFLL…LLIV), 64–84 (ILVV…CELV), 112–132 (VLWW…FFIL), 139–158 (ITVL…WFVM), 168–187 (FGAT…YGLS), 205–225 (GQLL…IWPC), and 226–246 (TFPL…ITLF). Position 285 is a phosphoserine (serine 285).

Belongs to the ELO family. ELOVL5 subfamily. Interacts with TECR.

It localises to the endoplasmic reticulum membrane. Its subcellular location is the cell projection. It is found in the dendrite. It catalyses the reaction a very-long-chain acyl-CoA + malonyl-CoA + H(+) = a very-long-chain 3-oxoacyl-CoA + CO2 + CoA. It carries out the reaction (6Z,9Z,12Z)-octadecatrienoyl-CoA + malonyl-CoA + H(+) = (8Z,11Z,14Z)-3-oxoeicosatrienoyl-CoA + CO2 + CoA. The catalysed reaction is (9Z,12Z,15Z)-octadecatrienoyl-CoA + malonyl-CoA + H(+) = (11Z,14Z,17Z)-3-oxoeicosatrienoyl-CoA + CO2 + CoA. The enzyme catalyses (9Z)-hexadecenoyl-CoA + malonyl-CoA + H(+) = 3-oxo-(11Z)-octadecenoyl-CoA + CO2 + CoA. It catalyses the reaction (9Z)-octadecenoyl-CoA + malonyl-CoA + H(+) = 3-oxo-(11Z)-eicosenoyl-CoA + CO2 + CoA. It carries out the reaction (11Z)-octadecenoyl-CoA + malonyl-CoA + H(+) = 3-oxo-(13Z)-eicosenoyl-CoA + CO2 + CoA. The catalysed reaction is (9Z,12Z)-octadecadienoyl-CoA + malonyl-CoA + H(+) = (11Z,14Z)-3-oxoicosa-11,14-dienoyl-CoA + CO2 + CoA. The enzyme catalyses (6Z,9Z,12Z,15Z)-octadecatetraenoyl-CoA + malonyl-CoA + H(+) = (8Z,11Z,14Z,17Z)-3-oxoicosatetraenoyl-CoA + CO2 + CoA. It catalyses the reaction (5Z,8Z,11Z,14Z)-eicosatetraenoyl-CoA + malonyl-CoA + H(+) = (7Z,10Z,13Z,16Z)-3-oxodocosatetraenoyl-CoA + CO2 + CoA. It carries out the reaction (5Z,8Z,11Z,14Z,17Z)-eicosapentaenoyl-CoA + malonyl-CoA + H(+) = 3-oxo-(7Z,10Z,13Z,16Z,19Z)-docosapentaenoyl-CoA + CO2 + CoA. Its pathway is lipid metabolism; polyunsaturated fatty acid biosynthesis. Catalyzes the first and rate-limiting reaction of the four reactions that constitute the long-chain fatty acids elongation cycle. This endoplasmic reticulum-bound enzymatic process allows the addition of 2 carbons to the chain of long- and very long-chain fatty acids (VLCFAs) per cycle. Condensing enzyme that acts specifically toward polyunsaturated acyl-CoA with the higher activity toward C18:3(n-6) acyl-CoA. May participate in the production of monounsaturated and of polyunsaturated VLCFAs of different chain lengths that are involved in multiple biological processes as precursors of membrane lipids and lipid mediators. In conditions where the essential linoleic and alpha linoleic fatty acids are lacking it is also involved in the synthesis of Mead acid from oleic acid. The chain is Very long chain fatty acid elongase 5 from Bos taurus (Bovine).